The chain runs to 170 residues: Peptide deformylase (170 aa).

Fe cation is bound by residues Cys94 and His136. Residue Glu137 is part of the active site. His140 contacts Fe cation.

Belongs to the polypeptide deformylase family. Fe(2+) is required as a cofactor.

The catalysed reaction is N-terminal N-formyl-L-methionyl-[peptide] + H2O = N-terminal L-methionyl-[peptide] + formate. In terms of biological role, removes the formyl group from the N-terminal Met of newly synthesized proteins. Requires at least a dipeptide for an efficient rate of reaction. N-terminal L-methionine is a prerequisite for activity but the enzyme has broad specificity at other positions. The polypeptide is Peptide deformylase (Xylella fastidiosa (strain M12)).